Here is a 190-residue protein sequence, read N- to C-terminus: D-glycero-beta-D-manno-heptose-1,7-bisphosphate 7-phosphatase (190 aa).

D11 acts as the Nucleophile in catalysis. The Mg(2+) site is built by D11 and D13. Residues 11–13, 19–22, and 53–56 contribute to the substrate site; these read DRD, DHGY, and TNQS. The active-site Proton donor is the D13. Positions 92, 94, 107, and 109 each coordinate Zn(2+). 110-111 contributes to the substrate binding site; it reads RK. Mg(2+) is bound by residues D136 and K137. A substrate-binding site is contributed by K137.

The protein belongs to the GmhB family. As to quaternary structure, monomer. It depends on Mg(2+) as a cofactor. Requires Zn(2+) as cofactor.

It is found in the cytoplasm. The enzyme catalyses D-glycero-beta-D-manno-heptose 1,7-bisphosphate + H2O = D-glycero-beta-D-manno-heptose 1-phosphate + phosphate. The protein operates within nucleotide-sugar biosynthesis; ADP-L-glycero-beta-D-manno-heptose biosynthesis; ADP-L-glycero-beta-D-manno-heptose from D-glycero-beta-D-manno-heptose 7-phosphate: step 2/4. Its pathway is bacterial outer membrane biogenesis; LPS core biosynthesis. Converts the D-glycero-beta-D-manno-heptose 1,7-bisphosphate intermediate into D-glycero-beta-D-manno-heptose 1-phosphate by removing the phosphate group at the C-7 position. This Escherichia coli O6:H1 (strain CFT073 / ATCC 700928 / UPEC) protein is D-glycero-beta-D-manno-heptose-1,7-bisphosphate 7-phosphatase (gmhB).